We begin with the raw amino-acid sequence, 99 residues long: MLIMNLQLFAHKKGVGSSKNGRDSESKRLGVKSTDGEFVLAGNIIVRQRGTKIHPGNNVGRGKDDTLFAKIDGVVKFERVGKDKKKASVYPVDVEAIAE.

Residues 1 to 9 (MLIMNLQLF) constitute a propeptide that is removed on maturation.

Belongs to the bacterial ribosomal protein bL27 family. In terms of processing, the N-terminus is cleaved by ribosomal processing cysteine protease Prp.

The sequence is that of Large ribosomal subunit protein bL27 from Clostridium botulinum (strain Alaska E43 / Type E3).